The primary structure comprises 153 residues: MSNQLNTMDIKEILKFLPHRYPFLLIDRVLDFTPGETLHAIKNVTINEPFFQGHFPVAPVMPGVLILEAMAQATGLLAFKTMSDEPSNDALYYFAGIDNARFKRVVEPGDQLHFEVKMIKERRGIGVFTGEAKVDGELVCSAEIMCARREIAK.

The active site involves histidine 54.

Belongs to the thioester dehydratase family. FabZ subfamily.

It localises to the cytoplasm. It catalyses the reaction a (3R)-hydroxyacyl-[ACP] = a (2E)-enoyl-[ACP] + H2O. Its function is as follows. Involved in unsaturated fatty acids biosynthesis. Catalyzes the dehydration of short chain beta-hydroxyacyl-ACPs and long chain saturated and unsaturated beta-hydroxyacyl-ACPs. This is 3-hydroxyacyl-[acyl-carrier-protein] dehydratase FabZ from Shewanella loihica (strain ATCC BAA-1088 / PV-4).